A 289-amino-acid polypeptide reads, in one-letter code: MILLQQVWLPLPNRPSTSPPMSVAARSTGTLQLPPQKAFGQEASLPLAGEEDLAKRGEPDSALEELCKPLFCKLCNVTLNSAQQAQAHYQGKNHGKKLRNYYAANSCPPPARMSSVAEPVATPLVPVPPQVGSCKPGGRVILATENDYCKLCDASFSSPAVAQAHYQGKNHAKRLRLAEAQSHSFSDSAEAGQRRTRKEGSEFKMVTTRRNMYTVQSNSGPYFNARSRQRIPRDLAMCVTPSGQFYCSMCNVGAGEEVEFRQHLESKQHKSKVSEQRYRSEMENLGYVQ.

Matrin-type zinc fingers lie at residues 70 to 100 (LFCKLCNVTLNSAQQAQAHYQGKNHGKKLRN) and 147 to 177 (DYCKLCDASFSSPAVAQAHYQGKNHAKRLRL). Disordered stretches follow at residues 180–202 (AQSHSFSDSAEAGQRRTRKEGSE) and 265–289 (ESKQHKSKVSEQRYRSEMENLGYVQ). A Matrin-type 3 zinc finger spans residues 245-275 (FYCSMCNVGAGEEVEFRQHLESKQHKSKVSE). Positions 265 to 282 (ESKQHKSKVSEQRYRSEM) are enriched in basic and acidic residues.

In terms of assembly, interacts with dsRNA. Highly expressed in brain, gut, lung, and testis.

Its subcellular location is the nucleus. It is found in the nucleolus. Functionally, acts as a bona fide target gene of p53/TP53. May play a role in the TP53-dependent growth regulatory pathway. May contribute to TP53-mediated apoptosis by regulation of TP53 expression and translocation to the nucleus and nucleolus. The polypeptide is Zinc finger matrin-type protein 3 (Rattus norvegicus (Rat)).